Reading from the N-terminus, the 319-residue chain is Acetyl-coenzyme A carboxylase carboxyl transferase subunit alpha (319 aa).

The CoA carboxyltransferase C-terminal domain occupies 35 to 296; that stretch reads NLDEEVQRLR…KAQLLIDLAE (262 aa).

The protein belongs to the AccA family. As to quaternary structure, acetyl-CoA carboxylase is a heterohexamer composed of biotin carboxyl carrier protein (AccB), biotin carboxylase (AccC) and two subunits each of ACCase subunit alpha (AccA) and ACCase subunit beta (AccD).

The protein localises to the cytoplasm. It carries out the reaction N(6)-carboxybiotinyl-L-lysyl-[protein] + acetyl-CoA = N(6)-biotinyl-L-lysyl-[protein] + malonyl-CoA. It functions in the pathway lipid metabolism; malonyl-CoA biosynthesis; malonyl-CoA from acetyl-CoA: step 1/1. Its function is as follows. Component of the acetyl coenzyme A carboxylase (ACC) complex. First, biotin carboxylase catalyzes the carboxylation of biotin on its carrier protein (BCCP) and then the CO(2) group is transferred by the carboxyltransferase to acetyl-CoA to form malonyl-CoA. This Photorhabdus laumondii subsp. laumondii (strain DSM 15139 / CIP 105565 / TT01) (Photorhabdus luminescens subsp. laumondii) protein is Acetyl-coenzyme A carboxylase carboxyl transferase subunit alpha.